Reading from the N-terminus, the 131-residue chain is Con-Ins Q1 (131 aa).

Residues 1-24 (MTTSSYFLLVALGLLLYLCQSSFG) form the signal peptide. 4 disulfide bridges follow: cysteine 29/cysteine 107, cysteine 41/cysteine 110, cysteine 53/cysteine 123, and cysteine 109/cysteine 114. The propeptide at 59–92 (LQGGTDDARKKRGRASLLRKRRGFLSMLKARAKR) is c peptide. Glutamate 118 is subject to 4-carboxyglutamate; partial. At serine 130 the chain carries Serine amide.

It belongs to the insulin family. As to quaternary structure, heterodimer of A and B chains; disulfide-linked. As to expression, expressed by the venom gland.

The protein localises to the secreted. Functionally, this venom insulin facilitates prey capture by rapidly inducing hypoglycemic shock. Intraperitoneal injection of this peptide into zebrafish lowers blood glucose with the same potency than human insulin. In vivo, when applied to water, this peptide reduces overall locomotor activity of zebrafish larvae, observed as a significant decrease in the percentage of time spent swimming and movement frequency. This chain is Con-Ins Q1, found in Conus quercinus (Oak cone).